A 118-amino-acid chain; its full sequence is MSDNFAAVGIALVVAIAINLIMMLMPKLLAPKKPVPEKLTPYEGGNQTIGRTWLGFKSNYFLYALVFTAFDVETVFLFPWALSFRQLGTFAFIEMFVFIVILLVGFWYAWKEGALEWM.

The next 3 helical transmembrane spans lie at 5–25 (FAAV…MMLM), 61–81 (FLYA…FPWA), and 90–110 (FAFI…WYAW).

It belongs to the complex I subunit 3 family. NDH-1 is composed of 14 different subunits. Subunits NuoA, H, J, K, L, M, N constitute the membrane sector of the complex.

Its subcellular location is the cell membrane. The enzyme catalyses a quinone + NADH + 5 H(+)(in) = a quinol + NAD(+) + 4 H(+)(out). NDH-1 shuttles electrons from NADH, via FMN and iron-sulfur (Fe-S) centers, to quinones in the respiratory chain. The immediate electron acceptor for the enzyme in this species is believed to be a menaquinone. Couples the redox reaction to proton translocation (for every two electrons transferred, four hydrogen ions are translocated across the cytoplasmic membrane), and thus conserves the redox energy in a proton gradient. The chain is NADH-quinone oxidoreductase subunit A from Desulfitobacterium hafniense (strain Y51).